A 347-amino-acid chain; its full sequence is MTKNNQSISYKDAGVDIDAGNALVEAIKPIAKATARPEVSTSLGGFGALFELPMDKYKNPLLVSGTDGVGTKLRLAIESGKHDQVGIDLVAMCVNDLIVQGAEPLFFLDYYATGKLDIYTARDVVAGIGEGCQQSGCALIGGETAEMPGMYPDGDYDLAGFCVGIVEKADLIDGTKVKAGDVLLGLASSGPHSNGYSLIRKIIEVNGANLNEECDGQPLIDALMAPTRIYVKSILALMKQIEIHAISHITGGGLLENLPRVMPNNTKAKVDTKSWNRPAVFDWIQTHGNVEFHEMHRTLNCGIGMVVVVDEKDQQAAIDALTAQGEVVSVIGKIESSESETPEVDLV.

It belongs to the AIR synthase family.

The protein resides in the cytoplasm. The enzyme catalyses 2-formamido-N(1)-(5-O-phospho-beta-D-ribosyl)acetamidine + ATP = 5-amino-1-(5-phospho-beta-D-ribosyl)imidazole + ADP + phosphate + H(+). Its pathway is purine metabolism; IMP biosynthesis via de novo pathway; 5-amino-1-(5-phospho-D-ribosyl)imidazole from N(2)-formyl-N(1)-(5-phospho-D-ribosyl)glycinamide: step 2/2. In Hydrogenovibrio crunogenus (strain DSM 25203 / XCL-2) (Thiomicrospira crunogena), this protein is Phosphoribosylformylglycinamidine cyclo-ligase.